A 749-amino-acid polypeptide reads, in one-letter code: Semaphorin-3B (749 aa).

Positions 1-24 (MGRAGAAAVIPGLALLWAVGLGSA) are cleaved as a signal peptide. Residues 30 to 513 (RLRLSFQELQ…SRSAVAQIAL (484 aa)) form the Sema domain. An N-linked (GlcNAc...) asparagine glycan is attached at Asn82. Cysteines 102 and 113 form a disulfide. Asn124 carries an N-linked (GlcNAc...) asparagine glycan. 3 disulfide bridges follow: Cys131–Cys140, Cys269–Cys380, and Cys293–Cys340. Asn427 is a glycosylation site (N-linked (GlcNAc...) asparagine). Cystine bridges form between Cys516-Cys534 and Cys644-Cys710. The 87-residue stretch at 573–659 (PALLEHKVFG…GFTQPLRRLS (87 aa)) folds into the Ig-like C2-type domain. Residues 702–749 (GSANSLRMCRPQPALQSLPLESRRKGRNRRTHAPEPRAERGPRSATHW) are disordered. Over residues 733–743 (HAPEPRAERGP) the composition is skewed to basic and acidic residues.

The protein belongs to the semaphorin family. As to expression, expressed abundantly but differentially in a variety of neural and nonneural tissues.

It is found in the secreted. The protein localises to the endoplasmic reticulum. Inhibits axonal extension by providing local signals to specify territories inaccessible for growing axons. The chain is Semaphorin-3B (SEMA3B) from Homo sapiens (Human).